Reading from the N-terminus, the 257-residue chain is MADS-box transcription factor 1 (257 aa).

Residues 1–61 (MGRGKVELKR…GRLFEFSSSS (61 aa)) enclose the MADS-box domain. One can recognise a K-box domain in the interval 85–175 (NEINYQEYLK…RKKLQETSAE (91 aa)).

As to quaternary structure, may interact with the K-box of MADS6, MADS14 and MADS15.

The protein resides in the nucleus. Functionally, probable transcription factor involved in the development of floral organs. Required for the formation of inner floral organs (lodicules, stamens and carpels, or whorls 2, 3 and 4) and the lemma and palea (whorl 1), which are grass floral organs analogous to sepals. May be involved in the control of flowering time. Seems to act as transcriptional activator. May act upstream of the auxin-responsive protein GH3.8. The protein is MADS-box transcription factor 1 (MADS1) of Oryza sativa subsp. indica (Rice).